A 312-amino-acid polypeptide reads, in one-letter code: Aspartate carbamoyltransferase catalytic subunit (312 aa).

The carbamoyl phosphate site is built by R62 and T63. Position 90 (K90) interacts with L-aspartate. Carbamoyl phosphate is bound by residues R112, H140, and Q143. L-aspartate contacts are provided by R173 and R228. Carbamoyl phosphate-binding residues include G269 and P270.

It belongs to the aspartate/ornithine carbamoyltransferase superfamily. ATCase family. As to quaternary structure, heterododecamer (2C3:3R2) of six catalytic PyrB chains organized as two trimers (C3), and six regulatory PyrI chains organized as three dimers (R2).

The enzyme catalyses carbamoyl phosphate + L-aspartate = N-carbamoyl-L-aspartate + phosphate + H(+). Its pathway is pyrimidine metabolism; UMP biosynthesis via de novo pathway; (S)-dihydroorotate from bicarbonate: step 2/3. Catalyzes the condensation of carbamoyl phosphate and aspartate to form carbamoyl aspartate and inorganic phosphate, the committed step in the de novo pyrimidine nucleotide biosynthesis pathway. This is Aspartate carbamoyltransferase catalytic subunit from Deinococcus geothermalis (strain DSM 11300 / CIP 105573 / AG-3a).